Consider the following 476-residue polypeptide: Major facilitator superfamily domain-containing protein 12 (476 aa).

An N-acetylmethionine modification is found at Met1. The Cytoplasmic portion of the chain corresponds to 1–25; that stretch reads MSPPSDDAGPGPPRTLSLAARLSFA. Residues 26–46 form a helical membrane-spanning segment; sequence VGHFLNDLCAGMWFTYLLLFL. The Lumenal portion of the chain corresponds to 47 to 55; it reads HSVRGYSSR. A helical membrane pass occupies residues 56 to 76; that stretch reads GAGLLLLLGQVADGLCTPLVG. The Cytoplasmic portion of the chain corresponds to 77-94; it reads YEADRASCVRCGPRKAWH. Residues 95–115 form a helical membrane-spanning segment; that stretch reads LAGTVCVLLSFPFIFSPCLGC. At 116-121 the chain is on the lumenal side; it reads GEATPE. Residues 122-142 traverse the membrane as a helical segment; the sequence is WAALLYYGPFIVVFQFGWAAT. Residues 143–167 lie on the Cytoplasmic side of the membrane; sequence QIAHLSLIPELVTSDHEKVELTALR. Residues 168-188 traverse the membrane as a helical segment; the sequence is YAFTVVANITVYGAAWLLLHL. Residues 189–213 lie on the Lumenal side of the membrane; that stretch reads QGSAHGEQDISVGDQLGVQDVPVFR. Residues 214–234 form a helical membrane-spanning segment; that stretch reads NLALLVVGVGAIFSLLFHLGT. Residues 235–284 are Cytoplasmic-facing; it reads KEGHRSQHWGNEPNEHTPLVAPAAQPLLLWKHWLREPAFYQVGMLYMTTR. Thr251 bears the Phosphothreonine mark. Residues 285 to 305 form a helical membrane-spanning segment; sequence LIVNLSQTYIAMYLTYSLSLP. Lys306 is a topological domain (lumenal). A helical transmembrane segment spans residues 307-327; it reads KFIATIPLVMYLSGFFSSFLM. At 328–343 the chain is on the cytoplasmic side; that stretch reads KPVNRRIGRNMTYFTG. Helical transmembrane passes span 344–364 and 365–385; these read LLVI…GVAV and YGAA…SLAM. At 386-398 the chain is on the cytoplasmic side; that stretch reads TADLIGPHTHSGA. The helical transmembrane segment at 399–419 threads the bilayer; that stretch reads FVYGAMSFSDKVANGLAVMAV. At 420–444 the chain is on the lumenal side; that stretch reads QSLHPCPSELCCGACISFYHWVMTA. Residues 445–465 traverse the membrane as a helical segment; it reads VTGGVGVAAALALCSLLIWPI. Residues 466-476 lie on the Cytoplasmic side of the membrane; that stretch reads RIRNRDPRDRP.

Belongs to the major facilitator superfamily. Post-translationally, phosphorylation at Thr-251 by MTOR via mTORC1 pathway promotes cysteine transport in lysosomes, thereby regulating lysosomal cysteine and cystine storage and redox homeostasis.

It is found in the melanosome membrane. The protein localises to the lysosome membrane. The enzyme catalyses L-cysteine(in) = L-cysteine(out). In terms of biological role, transporter that mediates the import of cysteine into melanosomes, thereby regulating skin/hair pigmentation. In melanosomes, cysteine import is required both for normal levels of cystine, the oxidized dimer of cysteine, and provide cysteine for the production of the cysteinyldopas used in pheomelanin synthesis, thereby regulating skin/hair pigmentation. Also catalyzes import of cysteine into lysosomes in non-pigmented cells, regulating lysosomal cystine and cysteine storage, which is essnetial for redox homeostasis. The polypeptide is Major facilitator superfamily domain-containing protein 12 (Mus musculus (Mouse)).